We begin with the raw amino-acid sequence, 305 residues long: Acyl transferase (305 aa).

Catalysis depends on charge relay system residues S116, D213, and H243.

This sequence belongs to the LuxD family.

It participates in lipid metabolism; fatty acid reduction for biolumincescence. In terms of biological role, acyl transferase is part of the fatty acid reductase system required for aldehyde biosynthesis; it produces fatty acids for the luminescent reaction. The protein is Acyl transferase of Shewanella woodyi (strain ATCC 51908 / MS32).